The following is a 233-amino-acid chain: Antiholin-like protein LrgB (233 aa).

6 consecutive transmembrane segments (helical) span residues 5–25 (LGIN…VIAT), 33–53 (GFFL…FLKL), 63–83 (IGGD…AIPL), 97–117 (IFGG…LVAI), 152–172 (LTSL…AKIV), and 212–232 (IAVV…APIL).

It belongs to the CidB/LrgB family. LrgB subfamily.

The protein resides in the cell membrane. Functionally, inhibits the expression or activity of extracellular murein hydrolases by interacting, possibly with LrgA, with the holin-like proteins CidA and/or CidB. The LrgAB and CidAB proteins may affect the proton motive force of the membrane. May be involved in programmed cell death (PCD), possibly triggering PCD in response to antibiotics and environmental stresses. The protein is Antiholin-like protein LrgB of Staphylococcus epidermidis (strain ATCC 12228 / FDA PCI 1200).